The primary structure comprises 372 residues: Putative F-box/kelch-repeat protein At3g22730 (372 aa).

One can recognise an F-box domain in the interval 1 to 50 (MMMSDLSLDLVEEILSRVPATSLKRLRSTCKLWNALFKNPGFTKKQFLKA). Kelch repeat units follow at residues 155–204 (ILRC…SFKG), 245–293 (ALSV…PIRG), and 324–372 (KVYI…IIKE).

The chain is Putative F-box/kelch-repeat protein At3g22730 from Arabidopsis thaliana (Mouse-ear cress).